The primary structure comprises 103 residues: Large ribosomal subunit protein uL24 (103 aa).

It belongs to the universal ribosomal protein uL24 family. Part of the 50S ribosomal subunit.

Its function is as follows. One of two assembly initiator proteins, it binds directly to the 5'-end of the 23S rRNA, where it nucleates assembly of the 50S subunit. One of the proteins that surrounds the polypeptide exit tunnel on the outside of the subunit. This chain is Large ribosomal subunit protein uL24, found in Listeria monocytogenes serotype 4a (strain HCC23).